Consider the following 479-residue polypeptide: Gamma-aminobutyric acid receptor subunit rho-1 (479 aa).

The signal sequence occupies residues Met1–Ala21. The Extracellular portion of the chain corresponds to Thr22–His280. The segment at Glu32 to Lys55 is disordered. Residues Gln45 to Lys55 are compositionally biased toward basic and acidic residues. Arg125 serves as a coordination point for 4-aminobutanoate. The N-linked (GlcNAc...) asparagine glycan is linked to Asn140. Residue Ser189 participates in 4-aminobutanoate binding. Cys198 and Cys212 are joined by a disulfide. Residue Glu217 coordinates 4-aminobutanoate. Asn234 and Asn274 each carry an N-linked (GlcNAc...) asparagine glycan. The chain crosses the membrane as a helical span at residues Ile281 to Val301. The Cytoplasmic portion of the chain corresponds to Ser302–Arg313. Residues Val314–Ser334 form a helical membrane-spanning segment. At Met335–Asp345 the chain is on the extracellular side. The chain crosses the membrane as a helical span at residues Ile346–Asn366. Residues Tyr367–Lys457 lie on the Cytoplasmic side of the membrane. Residues Tyr458 to Phe478 form a helical membrane-spanning segment. Residue Ser479 is a topological domain, extracellular.

It belongs to the ligand-gated ion channel (TC 1.A.9) family. Gamma-aminobutyric acid receptor (TC 1.A.9.5) subfamily. GABRR1 sub-subfamily. As to quaternary structure, three rho subunits (rho-1/GBRR1, rho-2/GBRR2 and rho-3/GBRR3) coassemble either to form functional homopentamers or heteropentamers. Rho-1/GBRR1 subunits can also associate with alpha-1/GBRA1 subunits to form a functional GABAAR. Interacts with SQSTM1. In terms of tissue distribution, highly expressed in the retina. Expressed in a lesser extent in brain, lung and thymus.

Its subcellular location is the postsynaptic cell membrane. It localises to the cell membrane. It catalyses the reaction chloride(in) = chloride(out). With respect to regulation, inhibited by TPMPA, a rho-specific antagonist, when forming a homopentamer. In contrast with other GABAARs, rho-1 GABAAR is not inhibited by bicuculline, when forming a homopentamer. In terms of biological role, rho subunit of the pentameric ligand-gated chloride channels responsible for mediating the effects of gamma-aminobutyric acid (GABA), the major inhibitory neurotransmitter in the brain. Rho-containing GABA-gated chloride channels are a subclass of GABA(A) receptors (GABAARs) entirely composed of rho subunits, where GABA molecules bind at the rho intersubunit interfaces. When activated by GABA, rho-GABAARs selectively allow the flow of chloride anions across the cell membrane down their electrochemical gradient. Rho-1 subunits are primarily expressed in retina where rho-1-containing GABAARs may play a role in retinal neurotransmission. Rho-1 GABAARs are also involved in neuronal tonic (extrasynaptic) and phasic (synaptic) transmission in the Purkinje neurons of the cerebellum. Rho-1 GABAARs may also contribute to the regulation of glial development in the cerebellum by controlling extrasynaptic transmission. This is Gamma-aminobutyric acid receptor subunit rho-1 from Homo sapiens (Human).